Reading from the N-terminus, the 476-residue chain is 3-isopropylmalate dehydratase large subunit (476 aa).

[4Fe-4S] cluster contacts are provided by cysteine 355, cysteine 416, and cysteine 419.

It belongs to the aconitase/IPM isomerase family. LeuC type 1 subfamily. As to quaternary structure, heterodimer of LeuC and LeuD. [4Fe-4S] cluster is required as a cofactor.

The enzyme catalyses (2R,3S)-3-isopropylmalate = (2S)-2-isopropylmalate. It participates in amino-acid biosynthesis; L-leucine biosynthesis; L-leucine from 3-methyl-2-oxobutanoate: step 2/4. In terms of biological role, catalyzes the isomerization between 2-isopropylmalate and 3-isopropylmalate, via the formation of 2-isopropylmaleate. This Sphingopyxis alaskensis (strain DSM 13593 / LMG 18877 / RB2256) (Sphingomonas alaskensis) protein is 3-isopropylmalate dehydratase large subunit.